The primary structure comprises 753 residues: Metal regulatory transcription factor 1 (753 aa).

An N-acetylglycine modification is found at G2. S5 carries the post-translational modification Phosphoserine. The short motif at 133-138 is the Nuclear localization signal element; the sequence is KRKEVK. 6 consecutive C2H2-type zinc fingers follow at residues 140–164, 170–194, 200–224, 229–253, 259–283, and 289–313; these read YQCT…QKTH, FVCN…VRVH, FECD…QRLH, FNCE…IRTH, FRCD…VRTH, and FFCP…MKGH. Position 305 is a phosphoserine (S305). Disordered stretches follow at residues 308–328, 395–466, and 648–715; these read SHMK…QHNG, ESFN…ALLQ, and SRRK…LSAM. The segment covering 408-417 has biased composition (polar residues); it reads PPSTGNSASL. The span at 655-666 shows a compositional bias: pro residues; sequence SPPPPEPSPQAP. Positions 679–698 are enriched in low complexity; the sequence is SSAPVPGSSSSTLPSSCEQS. Polar residues predominate over residues 700–712; the sequence is QAETPSDPQTETL.

The protein resides in the nucleus. Its subcellular location is the cytoplasm. Functionally, zinc-dependent transcriptional regulator of cellular adaption to conditions of exposure to heavy metals. Binds to metal responsive elements (MRE) in promoters and activates the transcription of metallothionein genes like metallothionein-2/MT2A. Also regulates the expression of metalloproteases in response to intracellular zinc and functions as a catabolic regulator of cartilages. The sequence is that of Metal regulatory transcription factor 1 (MTF1) from Homo sapiens (Human).